Reading from the N-terminus, the 438-residue chain is MKLWGGRFRKAENQLMEEFNKSFGYDCVLYKKDIEGSVAHVHMQVKCGLLTEEEGKSITEGLKGILEDVENGKLVLDGEYEDIHSFTEINLIQRIGDVGKKLHTARSRNDQVAVDMRLYAKEKANDLVGLISEFKATIKDVADKNPVMMPGYTHLQRAQVVTFKHHLMAYYSMFDRDEKRIKNAIEILDESPLGCGALAGTTHDIDRSITCEQLGFKKVVDNFMDGVSDRDYLLELMSDFSIIMMHLSRLSEELILWSSQEFGFVEIDDLYTTGSSIMPQKKNPDGAELIRGKTGRVYGNLFGLFTVMKGIPLAYNKDMQEDKEGFFDSVHTLEMCIQIMDRMIATLKVNEDKMKQAVKNGFLNATEVADYLVKNNVAFRDAHGIVGSIVIYCEDNKKAIEDLTLEELHKFSDAFKEDIYDFIDYESILNKGIKKNLK.

It belongs to the lyase 1 family. Argininosuccinate lyase subfamily.

Its subcellular location is the cytoplasm. The catalysed reaction is 2-(N(omega)-L-arginino)succinate = fumarate + L-arginine. The protein operates within amino-acid biosynthesis; L-arginine biosynthesis; L-arginine from L-ornithine and carbamoyl phosphate: step 3/3. The chain is Argininosuccinate lyase from Clostridioides difficile (strain 630) (Peptoclostridium difficile).